The following is a 255-amino-acid chain: 6-phosphogluconolactonase 4 (255 aa).

It belongs to the glucosamine/galactosamine-6-phosphate isomerase family. 6-phosphogluconolactonase subfamily.

The protein resides in the cytoplasm. The enzyme catalyses 6-phospho-D-glucono-1,5-lactone + H2O = 6-phospho-D-gluconate + H(+). It participates in carbohydrate degradation; pentose phosphate pathway; D-ribulose 5-phosphate from D-glucose 6-phosphate (oxidative stage): step 2/3. Its function is as follows. Involved in the pentose phosphate pathway via hydrolysis of 6-phosphogluconolactone to 6-phosphogluconate. The polypeptide is 6-phosphogluconolactonase 4 (Saccharomyces cerevisiae (strain ATCC 204508 / S288c) (Baker's yeast)).